The chain runs to 480 residues: Adenosylhomocysteinase (480 aa).

Residues Thr-63, Asp-142, and Glu-203 each contribute to the substrate site. Position 204–206 (204–206 (TTT)) interacts with NAD(+). 2 residues coordinate substrate: Lys-233 and Asp-237. Residues Asn-238, 267–272 (GYGDVG), Glu-290, Asn-325, 346–348 (IGH), and Asn-394 contribute to the NAD(+) site.

The protein belongs to the adenosylhomocysteinase family. Requires NAD(+) as cofactor.

Its subcellular location is the cytoplasm. The catalysed reaction is S-adenosyl-L-homocysteine + H2O = L-homocysteine + adenosine. It participates in amino-acid biosynthesis; L-homocysteine biosynthesis; L-homocysteine from S-adenosyl-L-homocysteine: step 1/1. May play a key role in the regulation of the intracellular concentration of adenosylhomocysteine. This chain is Adenosylhomocysteinase, found in Xanthomonas campestris pv. campestris (strain 8004).